The following is a 146-amino-acid chain: Globin (146 aa).

An N-acetylserine modification is found at S1. The region spanning 1 to 146 (SLSGAEADLL…IIDALKKAGK (146 aa)) is the Globin domain. A heme b-binding site is contributed by H95.

The protein belongs to the globin family. As to quaternary structure, monomer.

This Bursatella leachii (Ragged sea hare) protein is Globin.